Here is a 97-residue protein sequence, read N- to C-terminus: Mapk-regulated corepressor-interacting protein 1 (97 aa).

Residues 1–30 (MTSSPVSRVVYNGKRNSSHRSPPNSSEIFT) are disordered. A Phosphoserine modification is found at Ser-21. Thr-30 carries the phosphothreonine modification. Tyr-41 is modified (phosphotyrosine). The segment at 77–97 (TFRPIDLSDLKRRNTQDAKKS) is disordered. The PXDLS motif signature appears at 80 to 84 (PIDLS). Basic and acidic residues predominate over residues 82–97 (DLSDLKRRNTQDAKKS).

It belongs to the MCRIP family. In terms of assembly, interacts (unphosphorylated form, via the PXDLS motif) with CTBP1, competitively inhibiting CTBP-ZEB1 interaction. Interacts with CTBP2. Interacts with MCRIP2. Interacts with DDX6. In terms of processing, phosphorylation by MAPK3/1 (ERK1/2) regulates MCRIP1 binding to CTBP(s).

The protein localises to the nucleus. Its subcellular location is the cytoplasm. The protein resides in the stress granule. Functionally, the phosphorylation status of MCRIP1 functions as a molecular switch to regulate epithelial-mesenchymal transition. Unphosphorylated MCRIP1 binds to and inhibits the transcriptional corepressor CTBP(s). When phosphorylated by MAPK/ERK, MCRIP1 releases CTBP(s) resulting in transcriptional silencing of the E-cadherin gene and induction of epithelial-mesenchymal transition. The sequence is that of Mapk-regulated corepressor-interacting protein 1 (MCRIP1) from Bos taurus (Bovine).